The primary structure comprises 239 residues: Leucine rich adaptor protein 1 (239 aa).

LRR repeat units lie at residues Leu-55–Leu-83 and Leu-93–Leu-114. Residues Leu-107–Gly-116 show a composition bias toward low complexity. Disordered regions lie at residues Leu-107 to Leu-139 and Lys-200 to Ala-219. A phosphoserine mark is found at Ser-118, Ser-126, Ser-129, and Ser-213.

Forms a tripartite complex with CDC42BPA/CDC42BPB and MYO18A acting as an adapter connecting both. Its binding to CDC42BPA/CDC42BPB results in their activation by abolition of their negative autoregulation. Interacts with CDC42BPA and CDC42BPB.

The protein resides in the cytoplasm. Functionally, acts as an activator of the canonical NF-kappa-B pathway and drive the production of pro-inflammatory cytokines. Promotes the antigen (Ag)-presenting and priming function of dendritic cells via the canonical NF-kappa-B pathway. In concert with MYO18A and CDC42BPA/CDC42BPB, is involved in modulating lamellar actomyosin retrograde flow that is crucial to cell protrusion and migration. Activates CDC42BPA/CDC42BPB and targets it to actomyosin through its interaction with MYO18A, leading to MYL9/MLC2 phosphorylation and MYH9/MYH10-dependent actomyosin assembly in the lamella. The protein is Leucine rich adaptor protein 1 (LURAP1) of Homo sapiens (Human).